The following is a 171-amino-acid chain: Ribosome maturation factor RimM (171 aa).

Residues 97–170 (KLNYFSWDHY…IIYMKLPVGL (74 aa)) enclose the PRC barrel domain.

The protein belongs to the RimM family. As to quaternary structure, binds ribosomal protein uS19.

The protein resides in the cytoplasm. In terms of biological role, an accessory protein needed during the final step in the assembly of 30S ribosomal subunit, possibly for assembly of the head region. Essential for efficient processing of 16S rRNA. May be needed both before and after RbfA during the maturation of 16S rRNA. It has affinity for free ribosomal 30S subunits but not for 70S ribosomes. The protein is Ribosome maturation factor RimM of Azobacteroides pseudotrichonymphae genomovar. CFP2.